The following is a 281-amino-acid chain: Ribosomal protein L11 methyltransferase (281 aa).

Residues Thr-133, Gly-154, Asp-175, and Asn-216 each coordinate S-adenosyl-L-methionine.

The protein belongs to the methyltransferase superfamily. PrmA family.

Its subcellular location is the cytoplasm. It catalyses the reaction L-lysyl-[protein] + 3 S-adenosyl-L-methionine = N(6),N(6),N(6)-trimethyl-L-lysyl-[protein] + 3 S-adenosyl-L-homocysteine + 3 H(+). Its function is as follows. Methylates ribosomal protein L11. In Campylobacter jejuni subsp. jejuni serotype O:23/36 (strain 81-176), this protein is Ribosomal protein L11 methyltransferase.